The primary structure comprises 260 residues: Cobalt transport protein CbiM (260 aa).

The first 34 residues, 1–34, serve as a signal peptide directing secretion; the sequence is MKLGESMKKNATLSVKIIAFLGVLIFTVMPVANA. Transmembrane regions (helical) follow at residues 39-59, 77-97, 109-129, 132-152, 175-195, and 215-235; these read EGYL…PFLI, LLFA…LPSF, LSTI…VLLF, LLLA…MAVM, IFFS…IQLG, and VFAI…VLIF.

The protein belongs to the CbiM family. As to quaternary structure, forms an energy-coupling factor (ECF) transporter complex composed of an ATP-binding protein (A component, CbiO), a transmembrane protein (T component, CbiQ) and 2 possible substrate-capture proteins (S components, CbiM and CbiN) of unknown stoichimetry.

It is found in the cell membrane. Its pathway is cofactor biosynthesis; adenosylcobalamin biosynthesis. In terms of biological role, part of the energy-coupling factor (ECF) transporter complex CbiMNOQ involved in cobalt import. The polypeptide is Cobalt transport protein CbiM (Clostridium cellulovorans (strain ATCC 35296 / DSM 3052 / OCM 3 / 743B)).